We begin with the raw amino-acid sequence, 523 residues long: Mogroside I-A1 synthase (523 aa).

Catalysis depends on His39, which acts as the Proton acceptor. Catalysis depends on Asp136, which acts as the Charge relay. Positions 311, 374, 392, 393, 394, 397, 413, and 414 each coordinate UDP-alpha-D-glucose.

The protein belongs to the UDP-glycosyltransferase family. In terms of tissue distribution, highly expressed in young fruits 15 and 34 days after anthesis (15-DAA and 34-DAA).

The enzyme catalyses mogrol + UDP-alpha-D-glucose = mogroside I-A1 + UDP + H(+). It catalyses the reaction mogroside I-A1 + UDP-alpha-D-glucose = mogroside IIE + UDP + H(+). The catalysed reaction is mogroside IE + UDP-alpha-D-glucose = mogroside IIE + UDP + H(+). It carries out the reaction mogroside II-A1 + UDP-alpha-D-glucose = mogroside IIIX + UDP + H(+). The enzyme catalyses mogroside II-A + UDP-alpha-D-glucose = mogroside III + UDP + H(+). It catalyses the reaction mogroside IIE + UDP-alpha-D-glucose = mogroside III-C3(1-&gt;6) + UDP + H(+). The catalysed reaction is mogroside III + UDP-alpha-D-glucose = isomogroside IV + UDP + H(+). It carries out the reaction mogroside III + UDP-alpha-D-glucose = mogroside IV + UDP + H(+). The enzyme catalyses mogroside IIIX + UDP-alpha-D-glucose = mogroside IVA + UDP + H(+). It catalyses the reaction siamenoside I + UDP-alpha-D-glucose = isomogroside V + UDP + H(+). Its pathway is secondary metabolite biosynthesis; terpenoid biosynthesis. Functionally, UDP-glycosyltransferase involved in the biosynthesis of cucurbitacin and mogroside tetracyclic triterpene natural products (e.g. siamenoside I and mogrosides IV, V and VI). Cucurbitacins have cytotoxic properties and exhibit deterrent taste as a defense barrier against herbivores. Mogrosides are nonsugar highly oxygenated compounds used as high-intensity zero-calorie sweeteners; they also possess pharmacological properties such as regulating immunity, lowering blood sugar and lipid levels, protecting the liver, and acting as antioxidants and antitumor agents. Catalyzes the C24 primary glucosylation of mogrol and mogroside I-E1, and the C3 primary glucosylation of mogroside I-A1, mogroside II-A1 and mogroside II-A. Also supports branching glucosylations of mogroside II-E, mogroside III, mogroside IIIx and siamenoside I. In Siraitia grosvenorii (Monk's fruit), this protein is Mogroside I-A1 synthase.